The sequence spans 133 residues: Ribonuclease P protein component (133 aa).

The protein belongs to the RnpA family. In terms of assembly, consists of a catalytic RNA component (M1 or rnpB) and a protein subunit.

It carries out the reaction Endonucleolytic cleavage of RNA, removing 5'-extranucleotides from tRNA precursor.. RNaseP catalyzes the removal of the 5'-leader sequence from pre-tRNA to produce the mature 5'-terminus. It can also cleave other RNA substrates such as 4.5S RNA. The protein component plays an auxiliary but essential role in vivo by binding to the 5'-leader sequence and broadening the substrate specificity of the ribozyme. This chain is Ribonuclease P protein component, found in Corynebacterium efficiens (strain DSM 44549 / YS-314 / AJ 12310 / JCM 11189 / NBRC 100395).